The sequence spans 597 residues: Kelch-like protein 21 (597 aa).

One can recognise a BTB domain in the interval 35-103; it reads LDVTLEAAGG…SYTGRVAVSG (69 aa). A BACK domain is found at 138–239; sequence CLDMQDFAEA…RRFYLLAHVE (102 aa). Kelch repeat units follow at residues 287-335, 336-382, 384-422, 423-470, 472-512, and 513-560; these read ILVL…ALGN, DIYV…VLDG, LYVVAADSTERYDHTTDSWEALQPMTYPMDNCSTTACRG, RLYA…TLNG, MYFV…VLGG, and KLYV…SIFR. The disordered stretch occupies residues 570 to 597; it reads GRGFELDSGSDDMDPGRPRPPRDPDELH. Basic and acidic residues predominate over residues 583–597; sequence DPGRPRPPRDPDELH.

As to quaternary structure, component of the BCR(KLHL21) E3 ubiquitin ligase complex, at least composed of CUL3, KLHL21 and RBX1.

It is found in the cytoplasm. Its subcellular location is the cytoskeleton. The protein localises to the spindle. The protein operates within protein modification; protein ubiquitination. Functionally, substrate-specific adapter of a BCR (BTB-CUL3-RBX1) E3 ubiquitin-protein ligase complex required for efficient chromosome alignment and cytokinesis. The BCR(KLHL21) E3 ubiquitin ligase complex regulates localization of the chromosomal passenger complex (CPC) from chromosomes to the spindle midzone in anaphase and mediates the ubiquitination of AURKB. Ubiquitination of AURKB by BCR(KLHL21) E3 ubiquitin ligase complex may not lead to its degradation by the proteasome. This chain is Kelch-like protein 21 (KLHL21), found in Homo sapiens (Human).